The sequence spans 262 residues: 3-deoxy-manno-octulosonate cytidylyltransferase (262 aa).

The protein belongs to the KdsB family.

The protein resides in the cytoplasm. It catalyses the reaction 3-deoxy-alpha-D-manno-oct-2-ulosonate + CTP = CMP-3-deoxy-beta-D-manno-octulosonate + diphosphate. It functions in the pathway nucleotide-sugar biosynthesis; CMP-3-deoxy-D-manno-octulosonate biosynthesis; CMP-3-deoxy-D-manno-octulosonate from 3-deoxy-D-manno-octulosonate and CTP: step 1/1. It participates in bacterial outer membrane biogenesis; lipopolysaccharide biosynthesis. Its function is as follows. Activates KDO (a required 8-carbon sugar) for incorporation into bacterial lipopolysaccharide in Gram-negative bacteria. This chain is 3-deoxy-manno-octulosonate cytidylyltransferase, found in Acidovorax sp. (strain JS42).